The chain runs to 466 residues: ATP synthase subunit beta (466 aa).

155 to 162 (GGAGVGKT) is a binding site for ATP.

It belongs to the ATPase alpha/beta chains family. As to quaternary structure, F-type ATPases have 2 components, CF(1) - the catalytic core - and CF(0) - the membrane proton channel. CF(1) has five subunits: alpha(3), beta(3), gamma(1), delta(1), epsilon(1). CF(0) has three main subunits: a(1), b(2) and c(9-12). The alpha and beta chains form an alternating ring which encloses part of the gamma chain. CF(1) is attached to CF(0) by a central stalk formed by the gamma and epsilon chains, while a peripheral stalk is formed by the delta and b chains.

The protein localises to the cell inner membrane. It catalyses the reaction ATP + H2O + 4 H(+)(in) = ADP + phosphate + 5 H(+)(out). Produces ATP from ADP in the presence of a proton gradient across the membrane. The catalytic sites are hosted primarily by the beta subunits. In Bordetella bronchiseptica (strain ATCC BAA-588 / NCTC 13252 / RB50) (Alcaligenes bronchisepticus), this protein is ATP synthase subunit beta.